Consider the following 385-residue polypeptide: Multidrug resistance protein MdtE (385 aa).

The N-terminal stretch at 1–20 is a signal peptide; it reads MNRRRKLLIPLLFCGAMLTA. The N-palmitoyl cysteine moiety is linked to residue Cys-21. Cys-21 is lipidated: S-diacylglycerol cysteine.

It belongs to the membrane fusion protein (MFP) (TC 8.A.1) family. As to quaternary structure, homotrimer. Part of the tripartite efflux system MdtEF-TolC, which is composed of an inner membrane transporter, MdtF, a membrane fusion protein, MdtE, and an outer membrane component, TolC. The complex forms a large protein conduit and can translocate molecules across both the inner and outer membranes.

Its subcellular location is the cell inner membrane. In terms of biological role, part of the tripartite efflux system MdtEF-TolC, which confers resistance to various compounds. This Escherichia coli O157:H7 protein is Multidrug resistance protein MdtE (mdtE).